The chain runs to 209 residues: Small ribosomal subunit protein uS4 (209 aa).

The tract at residues 22-45 is disordered; sequence RGRNPLLRKPNPPGQHGMQRKKKS. The S4 RNA-binding domain occupies 93-154; the sequence is CRLDNIVYRL…KSRRLAIVTE (62 aa).

The protein belongs to the universal ribosomal protein uS4 family. As to quaternary structure, part of the 30S ribosomal subunit. Contacts protein S5. The interaction surface between S4 and S5 is involved in control of translational fidelity.

Its function is as follows. One of the primary rRNA binding proteins, it binds directly to 16S rRNA where it nucleates assembly of the body of the 30S subunit. In terms of biological role, with S5 and S12 plays an important role in translational accuracy. The protein is Small ribosomal subunit protein uS4 of Chlamydia muridarum (strain MoPn / Nigg).